The sequence spans 217 residues: MGQKVNPTGLRVGIIRDWEAKWYAEKDFAAYLNEDLRIRKYIEQRLADASVSTVEIERAANRVNISIHTAKPGMVIGKGGSEVEALRKELNNLTGKRVHINIIEIKKPDLDAKLVGESIARQLEGRVAFRRAMRGAMQRTMRSGAKGIKTQVAGRLNGADMSRVEAYSDGTVPLHTLRADIDYSWVEARTTYGKLGVKTWIYRGEILPEKKSAKGGN.

Residues 38–106 (IRKYIEQRLA…RVHINIIEIK (69 aa)) form the KH type-2 domain.

It belongs to the universal ribosomal protein uS3 family. Part of the 30S ribosomal subunit. Forms a tight complex with proteins S10 and S14.

In terms of biological role, binds the lower part of the 30S subunit head. Binds mRNA in the 70S ribosome, positioning it for translation. The sequence is that of Small ribosomal subunit protein uS3 from Lactiplantibacillus plantarum (strain ATCC BAA-793 / NCIMB 8826 / WCFS1) (Lactobacillus plantarum).